Consider the following 245-residue polypeptide: MQRDPGTALVLFSGGQDSTTCLAWALENFERVETIGFDYGQRHRIELDVRPYLLERIRTDFPAWRGRLGGDHMIDMAVLGQISDTALTRGVEVALNANGLPNTFVPGRNLLFLGFAAALAYRLSAKHLVIGVAETDRFSYPDCRDDAVKAIQLALNLGMEKRFIIHTPLMHRDKAQTWALADWLGGEALVKLICEGSHTCYSGDREHRHSWGFGCGTCIECNLRAAGWEQFRSCKEAPVTAHEMT.

ATP is bound at residue 12–22 (FSGGQDSTTCL). Positions 200, 215, 218, and 221 each coordinate Zn(2+).

Belongs to the QueC family. The cofactor is Zn(2+).

It carries out the reaction 7-carboxy-7-deazaguanine + NH4(+) + ATP = 7-cyano-7-deazaguanine + ADP + phosphate + H2O + H(+). It participates in purine metabolism; 7-cyano-7-deazaguanine biosynthesis. In terms of biological role, catalyzes the ATP-dependent conversion of 7-carboxy-7-deazaguanine (CDG) to 7-cyano-7-deazaguanine (preQ(0)). The sequence is that of 7-cyano-7-deazaguanine synthase 2 from Mesorhizobium japonicum (strain LMG 29417 / CECT 9101 / MAFF 303099) (Mesorhizobium loti (strain MAFF 303099)).